Here is a 915-residue protein sequence, read N- to C-terminus: p53-induced death domain-containing protein 1 (915 aa).

N-acetylalanine is present on alanine 2. LRR repeat units lie at residues 131–152 (CLAHLDLSFNRLETLPTCVPEL), 154–176 (GLDALLLSHNHLSELPEALGALP), 177–199 (ALTFLTVTHNRLERLPLTLGSLS), 200–221 (TLQRLDLSENLLDTIPSEIGNL), 223–245 (SLSELNLASNRLQSLPASLAGLR), 246–268 (SLRLLVLHSNLLTSVPTGLVHLP), and 269–290 (LITRLDLRDNRLRDLPAELLDA). Position 304 is a phosphoserine (serine 304). ZU5 domains lie at 327 to 459 (DLDS…VLRP) and 460 to 601 (VSNT…WYTT). Peptidase S68 stretches follow at residues 428–457 (DLETQLEEEAPKRLWARCQVPHFSWFLVVL) and 571–599 (DITTQVALEFTHLYARFQVTHFSWYWLWY). Residues histidine 449, serine 451, histidine 591, and serine 593 contribute to the active site. The interval 585 to 721 (ARFQVTHFSW…TTALDREAQD (137 aa)) is UPA domain. One can recognise a Death domain in the interval 793 to 878 (TQSNLLSVAS…DVAEEVRAIL (86 aa)). Residues 888–915 (SIRRTGLAPEDSTLPGTSASQTPESAQA) are disordered. Residues 901-915 (LPGTSASQTPESAQA) show a composition bias toward polar residues.

In terms of assembly, forms a complex named the PIDDosome with CASP2 and CRADD. Forms a complex with IKBKG and RIPK1. Interacts with FADD and MADD. Post-translationally, undergoes autoproteolytic processing whose extent either directs cells towards survival or apoptotic pathways. Autoproteolytically cleaved into two main fragments PIDD-N and PIDD-C. PIDD-C can be further processed into PIDD-CC, a processing which is enhanced by DNA damage. The cleavage producing PIDD-C is required for translocation of PIDD1 to the nucleus upon DNA damage and activation of NF-kappa-B. PIDD-CC mediates the interaction with CRADD and the cleavage producing PIDD-CC is required for the activation of CASP2. PIDD-N remains associated with PIDD-C and PIDD-CC after cleavage. Ubiquitous.

It localises to the cytoplasm. It is found in the nucleus. Component of the DNA damage/stress response pathway that functions downstream of p53/TP53 and can either promote cell survival or apoptosis. Associated with CRADD and the CASP2 caspase, it forms the PIDDosome a complex that activates CASP2 and triggers apoptosis. Associated with IKBKG and RIPK1, it enhances sumoylation and ubiquitination of IKBKG which is important for activation of the transcription factor NF-kappa-B. This chain is p53-induced death domain-containing protein 1, found in Mus musculus (Mouse).